An 87-amino-acid polypeptide reads, in one-letter code: Small ribosomal subunit protein bS20 (87 aa).

It belongs to the bacterial ribosomal protein bS20 family.

Its function is as follows. Binds directly to 16S ribosomal RNA. The chain is Small ribosomal subunit protein bS20 from Geobacter sulfurreducens (strain ATCC 51573 / DSM 12127 / PCA).